Consider the following 517-residue polypeptide: MHGGQGPLLLLLLLAVCLGAQGRNQEERLLADLMQNYDPNLRPAERDSDVVNVSLKLTLTNLISLNEREEALTTNVWIEMQWCDYRLRWDPRDYEGLWVLRVPSTMVWRPDIVLENNVDGVFEVALYCNVLVSPDGCIYWLPPAIFRSACSISVTYFPFDWQNCSLIFQSQTYSTNEIDLQLSQEDGQTIEWIFIDPEAFTENGEWAIQHRPAKMLLDPAAPAQEAGHQKVVFYLLIQRKPLFYVINIIAPCVLISSVAILIHFLPAKAGGQKCTVAINVLLAQTVFLFLVAKKVPETSQAVPLISKYLTFLLVVTILIVVNAVVVLNVSLRSPHTHSMARGVRKVFLRLLPQLLRMHVRPLAPAAVQDTQSRLQNGSSGWSITTGEEVALCLPRSELLFQQWQRQGLVAAALEKLEKGPELGLSQFCGSLKQAAPAIQACVEACNLIACARHQQSHFDNGNEEWFLVGRVLDRVCFLAMLSLFICGTAGIFLMAHYNRVPALPFPGDPRPYLPSPD.

A signal peptide spans 1-22 (MHGGQGPLLLLLLLAVCLGAQG). Residues 23-240 (RNQEERLLAD…VVFYLLIQRK (218 aa)) are Extracellular-facing. N-linked (GlcNAc...) asparagine glycans are attached at residues N52 and N163. Residues C150 and C164 are joined by a disulfide bond. The next 3 helical transmembrane spans lie at 241–265 (PLFY…IHFL), 275–293 (TVAI…LVAK), and 309–330 (LTFL…LNVS). The Cytoplasmic portion of the chain corresponds to 331-474 (LRSPHTHSMA…WFLVGRVLDR (144 aa)). Residues 475 to 495 (VCFLAMLSLFICGTAGIFLMA) traverse the membrane as a helical segment.

This sequence belongs to the ligand-gated ion channel (TC 1.A.9) family. Acetylcholine receptor (TC 1.A.9.1) subfamily. Gamma/CHRNG sub-subfamily. Pentamer of two alpha chains, and one each of the beta, delta, and gamma (in immature muscle) or epsilon (in mature muscle) chains.

The protein localises to the postsynaptic cell membrane. Its subcellular location is the cell membrane. The catalysed reaction is K(+)(in) = K(+)(out). It catalyses the reaction Na(+)(in) = Na(+)(out). Its function is as follows. After binding acetylcholine, the AChR responds by an extensive change in conformation that affects all subunits and leads to opening of an ion-conducting channel across the plasma membrane. The protein is Acetylcholine receptor subunit gamma of Homo sapiens (Human).